The primary structure comprises 316 residues: UDP-N-acetylenolpyruvoylglucosamine reductase (316 aa).

One can recognise an FAD-binding PCMH-type domain in the interval 27-225 (VGGKAERFYR…KTAINALLKK (199 aa)). R190 is an active-site residue. Catalysis depends on S239, which acts as the Proton donor. E309 is a catalytic residue.

This sequence belongs to the MurB family. It depends on FAD as a cofactor.

It is found in the cytoplasm. It carries out the reaction UDP-N-acetyl-alpha-D-muramate + NADP(+) = UDP-N-acetyl-3-O-(1-carboxyvinyl)-alpha-D-glucosamine + NADPH + H(+). The protein operates within cell wall biogenesis; peptidoglycan biosynthesis. Functionally, cell wall formation. In Coxiella burnetii (strain RSA 331 / Henzerling II), this protein is UDP-N-acetylenolpyruvoylglucosamine reductase.